A 271-amino-acid polypeptide reads, in one-letter code: Tryptophan synthase alpha chain (271 aa).

Active-site proton acceptor residues include Glu59 and Asp70.

Belongs to the TrpA family. Tetramer of two alpha and two beta chains.

The catalysed reaction is (1S,2R)-1-C-(indol-3-yl)glycerol 3-phosphate + L-serine = D-glyceraldehyde 3-phosphate + L-tryptophan + H2O. It functions in the pathway amino-acid biosynthesis; L-tryptophan biosynthesis; L-tryptophan from chorismate: step 5/5. Functionally, the alpha subunit is responsible for the aldol cleavage of indoleglycerol phosphate to indole and glyceraldehyde 3-phosphate. The polypeptide is Tryptophan synthase alpha chain (Methanosarcina mazei (strain ATCC BAA-159 / DSM 3647 / Goe1 / Go1 / JCM 11833 / OCM 88) (Methanosarcina frisia)).